A 122-amino-acid polypeptide reads, in one-letter code: Large ribosomal subunit protein uL14 (122 aa).

It belongs to the universal ribosomal protein uL14 family. In terms of assembly, part of the 50S ribosomal subunit. Forms a cluster with proteins L3 and L19. In the 70S ribosome, L14 and L19 interact and together make contacts with the 16S rRNA in bridges B5 and B8.

Its function is as follows. Binds to 23S rRNA. Forms part of two intersubunit bridges in the 70S ribosome. In Pseudomonas entomophila (strain L48), this protein is Large ribosomal subunit protein uL14.